Here is a 320-residue protein sequence, read N- to C-terminus: Ferrochelatase (320 aa).

Fe cation is bound by residues His194 and Glu275.

This sequence belongs to the ferrochelatase family. Monomer.

The protein localises to the cytoplasm. It catalyses the reaction heme b + 2 H(+) = protoporphyrin IX + Fe(2+). The protein operates within porphyrin-containing compound metabolism; protoheme biosynthesis; protoheme from protoporphyrin-IX: step 1/1. Its function is as follows. Catalyzes the ferrous insertion into protoporphyrin IX. This Escherichia coli (strain SMS-3-5 / SECEC) protein is Ferrochelatase.